A 459-amino-acid polypeptide reads, in one-letter code: NADP-specific glutamate dehydrogenase (459 aa).

Residue Lys116 is part of the active site.

This sequence belongs to the Glu/Leu/Phe/Val dehydrogenases family. Homohexamer.

The enzyme catalyses L-glutamate + NADP(+) + H2O = 2-oxoglutarate + NH4(+) + NADPH + H(+). This is NADP-specific glutamate dehydrogenase (GDHA) from Schwanniomyces occidentalis (Yeast).